The chain runs to 400 residues: Enolase (400 aa).

Gln-154 serves as a coordination point for (2R)-2-phosphoglycerate. The active-site Proton donor is the Glu-197. Residues Asp-233, Glu-274, and Asp-301 each coordinate Mg(2+). (2R)-2-phosphoglycerate is bound by residues Lys-326, Arg-355, Ser-356, and Lys-377. Lys-326 acts as the Proton acceptor in catalysis.

This sequence belongs to the enolase family. Requires Mg(2+) as cofactor.

The protein localises to the cytoplasm. Its subcellular location is the secreted. It is found in the cell surface. It catalyses the reaction (2R)-2-phosphoglycerate = phosphoenolpyruvate + H2O. It functions in the pathway carbohydrate degradation; glycolysis; pyruvate from D-glyceraldehyde 3-phosphate: step 4/5. Catalyzes the reversible conversion of 2-phosphoglycerate (2-PG) into phosphoenolpyruvate (PEP). It is essential for the degradation of carbohydrates via glycolysis. In Picrophilus torridus (strain ATCC 700027 / DSM 9790 / JCM 10055 / NBRC 100828 / KAW 2/3), this protein is Enolase.